The primary structure comprises 345 residues: S-adenosylmethionine:tRNA ribosyltransferase-isomerase (345 aa).

It belongs to the QueA family. In terms of assembly, monomer.

It is found in the cytoplasm. The enzyme catalyses 7-aminomethyl-7-carbaguanosine(34) in tRNA + S-adenosyl-L-methionine = epoxyqueuosine(34) in tRNA + adenine + L-methionine + 2 H(+). The protein operates within tRNA modification; tRNA-queuosine biosynthesis. Its function is as follows. Transfers and isomerizes the ribose moiety from AdoMet to the 7-aminomethyl group of 7-deazaguanine (preQ1-tRNA) to give epoxyqueuosine (oQ-tRNA). This Shewanella oneidensis (strain ATCC 700550 / JCM 31522 / CIP 106686 / LMG 19005 / NCIMB 14063 / MR-1) protein is S-adenosylmethionine:tRNA ribosyltransferase-isomerase.